We begin with the raw amino-acid sequence, 396 residues long: Acetate kinase (396 aa).

Position 7 (N7) interacts with Mg(2+). K14 contacts ATP. Residue R88 participates in substrate binding. D145 (proton donor/acceptor) is an active-site residue. ATP-binding positions include 205–209 (HLGNG), 279–281 (DFR), and 327–331 (GIGEN). Residue E381 coordinates Mg(2+).

It belongs to the acetokinase family. In terms of assembly, homodimer. The cofactor is Mg(2+). It depends on Mn(2+) as a cofactor.

It is found in the cytoplasm. The enzyme catalyses acetate + ATP = acetyl phosphate + ADP. It functions in the pathway metabolic intermediate biosynthesis; acetyl-CoA biosynthesis; acetyl-CoA from acetate: step 1/2. Catalyzes the formation of acetyl phosphate from acetate and ATP. Can also catalyze the reverse reaction. This Campylobacter jejuni subsp. doylei (strain ATCC BAA-1458 / RM4099 / 269.97) protein is Acetate kinase.